A 417-amino-acid chain; its full sequence is uncharacterized protein (417 aa).

Belongs to the MG032/MG096/MG288 family.

This is an uncharacterized protein from Mycoplasma pneumoniae (strain ATCC 29342 / M129 / Subtype 1) (Mycoplasmoides pneumoniae).